Here is a 108-residue protein sequence, read N- to C-terminus: Small ribosomal subunit protein uS17 (108 aa).

This sequence belongs to the universal ribosomal protein uS17 family. In terms of assembly, part of the 30S ribosomal subunit.

In terms of biological role, one of the primary rRNA binding proteins, it binds specifically to the 5'-end of 16S ribosomal RNA. This is Small ribosomal subunit protein uS17 from Methanoculleus marisnigri (strain ATCC 35101 / DSM 1498 / JR1).